The chain runs to 254 residues: Syntaxin-6 (254 aa).

At 1-233 (MSMEDPFFVV…VSHMTSDRRQ (233 aa)) the chain is on the cytoplasmic side. A coiled-coil region spans residues 46–72 (TTNELRNNLRSIEWDLEDLDETISIVE). A disordered region spans residues 103–138 (KDQMSNSSMQALAERKNRQALLGESSSQSWSSGPDK). Residues 162–224 (QLIVEQQDEQ…DNVMKKLAKV (63 aa)) enclose the t-SNARE coiled-coil homology domain. A helical; Anchor for type IV membrane protein membrane pass occupies residues 234–254 (WCAIIVLFVILLVVLVLFLVL).

Belongs to the syntaxin family.

It localises to the golgi apparatus membrane. The protein resides in the golgi apparatus. It is found in the trans-Golgi network membrane. The protein localises to the recycling endosome membrane. Functionally, SNARE promoting movement of transport vesicles to target membranes. Targets endosomes to the trans-Golgi network, and may therefore function in retrograde trafficking. Together with SNARE STX12, promotes movement of vesicles from endosomes to the cell membrane, and may therefore function in the endocytic recycling pathway. This is Syntaxin-6 (STX6) from Gallus gallus (Chicken).